The chain runs to 118 residues: MGSRWGIAVLGLFCFVSCLEAITSSPKIQVYSRHPAQIGESNNLNCYVSSFHPPQISIRLLKNGQEMPGVEMSDLSFSNDWTFHRLVHTVFTPSNQDTFECEVVHEGVKKTVKWEPDN.

An N-terminal signal peptide occupies residues 1-21; it reads MGSRWGIAVLGLFCFVSCLEA. An Ig-like C1-type domain is found at 26-113; it reads PKIQVYSRHP…VHEGVKKTVK (88 aa). Cysteines 46 and 101 form a disulfide.

This sequence belongs to the beta-2-microglobulin family. Heterodimer of an alpha chain and a beta chain. Beta-2-microglobulin is the beta-chain of major histocompatibility complex class I molecules.

Its subcellular location is the secreted. Its function is as follows. Component of the class I major histocompatibility complex (MHC). Involved in the presentation of peptide antigens to the immune system. The chain is Beta-2-microglobulin (B2M) from Ornithorhynchus anatinus (Duckbill platypus).